A 304-amino-acid polypeptide reads, in one-letter code: N-acetylmuramic acid 6-phosphate etherase (304 aa).

One can recognise an SIS domain in the interval 57 to 220 (AVKGLSAGGR…STATMVGLGK (164 aa)). The active-site Proton donor is Glu-85. Glu-116 is an active-site residue.

This sequence belongs to the GCKR-like family. MurNAc-6-P etherase subfamily. In terms of assembly, homodimer.

The enzyme catalyses N-acetyl-D-muramate 6-phosphate + H2O = N-acetyl-D-glucosamine 6-phosphate + (R)-lactate. It participates in amino-sugar metabolism; N-acetylmuramate degradation. In terms of biological role, specifically catalyzes the cleavage of the D-lactyl ether substituent of MurNAc 6-phosphate, producing GlcNAc 6-phosphate and D-lactate. This chain is N-acetylmuramic acid 6-phosphate etherase, found in Cutibacterium acnes (strain DSM 16379 / KPA171202) (Propionibacterium acnes).